A 473-amino-acid chain; its full sequence is Glutamate--tRNA ligase (473 aa).

The short motif at P11–G21 is the 'HIGH' region element. The 'KMSKS' region signature appears at K240–R244. Position 243 (K243) interacts with ATP.

Belongs to the class-I aminoacyl-tRNA synthetase family. Glutamate--tRNA ligase type 1 subfamily. In terms of assembly, monomer.

The protein resides in the cytoplasm. It catalyses the reaction tRNA(Glu) + L-glutamate + ATP = L-glutamyl-tRNA(Glu) + AMP + diphosphate. Catalyzes the attachment of glutamate to tRNA(Glu) in a two-step reaction: glutamate is first activated by ATP to form Glu-AMP and then transferred to the acceptor end of tRNA(Glu). The sequence is that of Glutamate--tRNA ligase from Rhodopseudomonas palustris (strain ATCC BAA-98 / CGA009).